A 124-amino-acid polypeptide reads, in one-letter code: Large ribosomal subunit protein bL12 (124 aa).

The protein belongs to the bacterial ribosomal protein bL12 family. Homodimer. Part of the ribosomal stalk of the 50S ribosomal subunit. Forms a multimeric L10(L12)X complex, where L10 forms an elongated spine to which 2 to 4 L12 dimers bind in a sequential fashion. Binds GTP-bound translation factors.

Its function is as follows. Forms part of the ribosomal stalk which helps the ribosome interact with GTP-bound translation factors. Is thus essential for accurate translation. The sequence is that of Large ribosomal subunit protein bL12 from Ralstonia nicotianae (strain ATCC BAA-1114 / GMI1000) (Ralstonia solanacearum).